Reading from the N-terminus, the 343-residue chain is L-threonine 3-dehydrogenase (343 aa).

C38 is a Zn(2+) binding site. Residues T40 and H43 each act as charge relay system in the active site. H63, E64, C93, C96, C99, and C107 together coordinate Zn(2+). NAD(+) is bound by residues I175, D195, R200, 262-264 (LGI), and 286-287 (IY).

This sequence belongs to the zinc-containing alcohol dehydrogenase family. In terms of assembly, homotetramer. The cofactor is Zn(2+).

The protein localises to the cytoplasm. The catalysed reaction is L-threonine + NAD(+) = (2S)-2-amino-3-oxobutanoate + NADH + H(+). The protein operates within amino-acid degradation; L-threonine degradation via oxydo-reductase pathway; glycine from L-threonine: step 1/2. Functionally, catalyzes the NAD(+)-dependent oxidation of L-threonine to 2-amino-3-ketobutyrate. The chain is L-threonine 3-dehydrogenase from Burkholderia mallei (strain NCTC 10247).